The chain runs to 74 residues: ATP synthase subunit c (74 aa).

A run of 2 helical transmembrane segments spans residues 5-25 (LAHIGAGLAAIGSGAAAIGVG) and 49-69 (LFIGIAFAEALGIFAFLVALL).

This sequence belongs to the ATPase C chain family. F-type ATPases have 2 components, F(1) - the catalytic core - and F(0) - the membrane proton channel. F(1) has five subunits: alpha(3), beta(3), gamma(1), delta(1), epsilon(1). F(0) has four main subunits: a(1), b(1), b'(1) and c(10-14). The alpha and beta chains form an alternating ring which encloses part of the gamma chain. F(1) is attached to F(0) by a central stalk formed by the gamma and epsilon chains, while a peripheral stalk is formed by the delta, b and b' chains.

It localises to the cell inner membrane. F(1)F(0) ATP synthase produces ATP from ADP in the presence of a proton or sodium gradient. F-type ATPases consist of two structural domains, F(1) containing the extramembraneous catalytic core and F(0) containing the membrane proton channel, linked together by a central stalk and a peripheral stalk. During catalysis, ATP synthesis in the catalytic domain of F(1) is coupled via a rotary mechanism of the central stalk subunits to proton translocation. In terms of biological role, key component of the F(0) channel; it plays a direct role in translocation across the membrane. A homomeric c-ring of between 10-14 subunits forms the central stalk rotor element with the F(1) delta and epsilon subunits. In Roseobacter denitrificans (strain ATCC 33942 / OCh 114) (Erythrobacter sp. (strain OCh 114)), this protein is ATP synthase subunit c.